The following is a 413-amino-acid chain: Cell surface GPI-anchored protein ECM33 (413 aa).

An N-terminal signal peptide occupies residues 1 to 20; sequence MQIKSFLLPIVAALLTSVSA. Residues asparagine 93, asparagine 102, asparagine 172, asparagine 209, asparagine 222, asparagine 227, asparagine 279, asparagine 290, asparagine 306, asparagine 322, and asparagine 382 are each glycosylated (N-linked (GlcNAc...) asparagine). The tract at residues 347-390 is disordered; it reads YVCTHPANPSSSSKSGSSTQTGKSDSKSSDGSSSSNSSSSSKKG. The segment covering 356–390 has biased composition (low complexity); sequence SSSSKSGSSTQTGKSDSKSSDGSSSSNSSSSSKKG. Residue glycine 390 is the site of GPI-anchor amidated glycine attachment. A propeptide spans 391 to 413 (removed in mature form); that stretch reads ASNVLVVPGMVLTTALGVLLALI.

It belongs to the SPS2 family.

Its subcellular location is the cell membrane. The protein localises to the secreted. It localises to the cell wall. Its function is as follows. Cell surface protein required for proper cell wall integrity and for the correct assembly of the mannoprotein outer layer of the cell wall. The polypeptide is Cell surface GPI-anchored protein ECM33 (ECM331) (Candida albicans (strain SC5314 / ATCC MYA-2876) (Yeast)).